The following is an 83-amino-acid chain: Cytochrome b559 subunit alpha (83 aa).

Residues 21–35 (VIHSITIPSLFIAGW) form a helical membrane-spanning segment. His-23 is a binding site for heme.

This sequence belongs to the PsbE/PsbF family. As to quaternary structure, heterodimer of an alpha subunit and a beta subunit. PSII is composed of 1 copy each of membrane proteins PsbA, PsbB, PsbC, PsbD, PsbE, PsbF, PsbH, PsbI, PsbJ, PsbK, PsbL, PsbM, PsbT, PsbX, PsbY, PsbZ, Psb30/Ycf12, at least 3 peripheral proteins of the oxygen-evolving complex and a large number of cofactors. It forms dimeric complexes. The cofactor is heme b.

The protein resides in the plastid. Its subcellular location is the chloroplast thylakoid membrane. In terms of biological role, this b-type cytochrome is tightly associated with the reaction center of photosystem II (PSII). PSII is a light-driven water:plastoquinone oxidoreductase that uses light energy to abstract electrons from H(2)O, generating O(2) and a proton gradient subsequently used for ATP formation. It consists of a core antenna complex that captures photons, and an electron transfer chain that converts photonic excitation into a charge separation. The sequence is that of Cytochrome b559 subunit alpha from Zygnema circumcarinatum (Green alga).